Reading from the N-terminus, the 342-residue chain is (Lyso)-N-acylphosphatidylethanolamine lipase (342 aa).

Residues 70–323 (PLVMVHGFGG…EIEGASHHVY (254 aa)) form the AB hydrolase-1 domain.

Belongs to the peptidase S33 family. ABHD4/ABHD5 subfamily. As to expression, highest levels in the CNS and in testis, intermediate levels in liver and kidney. Hardly detectable in heart.

The catalysed reaction is N-hexadecanoyl-1,2-di-(9Z-octadecenoyl)-sn-glycero-3-phosphoethanolamine + H2O = N-hexadecanoyl-1-(9Z-octadecenoyl)-sn-glycero-3-phosphoethanolamine + (9Z)-octadecenoate + H(+). The enzyme catalyses an N-acyl-1,2-diacyl-sn-glycero-3-phosphoethanolamine + H2O = N,1-diacyl-sn-glycero-3-phosphoethanolamine + a fatty acid + H(+). It carries out the reaction N-hexadecanoyl-1-(9Z-octadecenoyl)-sn-glycero-3-phosphoethanolamine + H2O = N-hexadecanoyl-sn-glycero-3-phosphoethanolamine + (9Z)-octadecenoate + H(+). It catalyses the reaction N-octadecanoyl-1-(9Z-octadecenoyl)-sn-glycero-3-phosphoethanolamine + H2O = N-octadecanoyl-sn-glycero-3-phospho-ethanolamine + (9Z)-octadecenoate + H(+). The catalysed reaction is N-eicosanoyl-1-(9Z-octadecenoyl)-sn-glycero-3-phosphoethanolamine + H2O = N-eicosanoyl-sn-glycero-3-phosphoethanolamine + (9Z)-octadecenoate + H(+). The enzyme catalyses N,1-di-(9Z-octadecenoyl)-sn-glycero-3-phosphoethanolamine + H2O = N-(9Z-octadecenoyl)-sn-glycero-3-phosphoethanolamine + (9Z)-octadecenoate + H(+). It carries out the reaction N-(5Z,8Z,11Z,14Z-eicosatetraenoyl)-1-(9Z-octadecenoyl)-sn-glycero-3-phosphoethanolamine + H2O = N-(5Z,8Z,11Z,14Z-eicosatetraenoyl)-sn-glycero-3-phosphoethanolamine + (9Z)-octadecenoate + H(+). It catalyses the reaction 1-octadecanoyl-2-(9Z-octadecenoyl)-sn-glycero-3-phospho-(N-hexadecanoyl)-serine + H2O = 1-octadecanoyl-2-hydroxy-sn-glycero-3-phospho-(N-hexadecanoyl)-serine + (9Z)-octadecenoate + H(+). The catalysed reaction is 1-O-(1Z-octadecenoyl)-2-(9Z-octadecenoyl)-sn-glycero-3-phospho-N-hexadecanoyl-ethanolamine + H2O = 1-O-(1Z-octadecenyl)-sn-glycero-3-phospho-N-hexadecanoyl-ethanolamine + (9Z)-octadecenoate + H(+). The enzyme catalyses N,1-diacyl-sn-glycero-3-phosphoethanolamine + H2O = N-acyl-sn-glycero-3-phosphoethanolamine + a fatty acid + H(+). In terms of biological role, lysophospholipase selective for N-acyl phosphatidylethanolamine (NAPE). Contributes to the biosynthesis of N-acyl ethanolamines, including the endocannabinoid anandamide by hydrolyzing the sn-1 and sn-2 acyl chains from N-acyl phosphatidylethanolamine (NAPE) generating glycerophospho-N-acyl ethanolamine (GP-NAE), an intermediate for N-acyl ethanolamine biosynthesis. Hydrolyzes substrates bearing saturated, monounsaturated, polyunsaturated N-acyl chains. Shows no significant activity towards other lysophospholipids, including lysophosphatidylcholine, lysophosphatidylethanolamine and lysophosphatidylserine. The protein is (Lyso)-N-acylphosphatidylethanolamine lipase of Mus musculus (Mouse).